The chain runs to 228 residues: NAD(P)H-hydrate epimerase (228 aa).

The YjeF N-terminal domain occupies 10–214 (AIDIDQELFN…DLERKYDLKI (205 aa)). (6S)-NADPHX is bound at residue 58 to 62 (NNGGD). K(+) contacts are provided by Asn59 and Asp123. Residues 127-133 (GFSFKPP) and Asp156 each bind (6S)-NADPHX. Ser159 lines the K(+) pocket.

It belongs to the NnrE/AIBP family. K(+) is required as a cofactor.

The enzyme catalyses (6R)-NADHX = (6S)-NADHX. The catalysed reaction is (6R)-NADPHX = (6S)-NADPHX. Catalyzes the epimerization of the S- and R-forms of NAD(P)HX, a damaged form of NAD(P)H that is a result of enzymatic or heat-dependent hydration. This is a prerequisite for the S-specific NAD(P)H-hydrate dehydratase to allow the repair of both epimers of NAD(P)HX. The sequence is that of NAD(P)H-hydrate epimerase from Pediculus humanus subsp. corporis (Body louse).